We begin with the raw amino-acid sequence, 156 residues long: Extracellular giant hemoglobin major globin subunit A1 (156 aa).

The signal sequence occupies residues 1–16 (MKVLIIFACLVVMASA). One can recognise a Globin domain in the interval 17–156 (VCNRLEQILV…YERIASGISG (140 aa)). Residues Cys-18 and Cys-146 are joined by a disulfide bond. Cys-79 is a binding site for hydrogen sulfide. His-110 contributes to the heme b binding site.

The protein belongs to the globin family. In terms of assembly, the 400 kDa hemoglobin consists of a spherical 24-mer arranged as a double layer of dome-shaped dodecamers. Each dodecamer is composed of the 3-fold trimer of the tetramer A1-A2-B1-B2 having one intra-tetramer (A1-B2) disulfide bond and one inter-tetramer (B1-B2) disulfide bond per tetramer.

It localises to the secreted. In terms of biological role, the extracellular giant hemoglobin is able to bind and transport oxygen and hydrosulfide simultaneously and reversibly at two different sites. This Oligobrachia mashikoi (Beard worm) protein is Extracellular giant hemoglobin major globin subunit A1 (ghbA1).